The following is a 585-amino-acid chain: Trehalase (585 aa).

An N-terminal signal peptide occupies residues 1–32 (MAKTTPMAKPSVGLLTLQVLVFCALTGSLASA). Substrate contacts are provided by residues Arg-184 and 191-192 (WD). An N-linked (GlcNAc...) asparagine glycan is attached at Asn-207. Residues Asn-228, 237–239 (RSQ), 302–304 (RPE), and Gly-336 each bind substrate. The Proton donor/acceptor role is filled by Asp-338. N-linked (GlcNAc...) asparagine glycosylation occurs at Asn-348. Residue Glu-535 is the Proton donor/acceptor of the active site. Residue Glu-550 coordinates substrate.

Belongs to the glycosyl hydrolase 37 family. As to expression, expressed by the venom gland.

Its subcellular location is the secreted. It carries out the reaction alpha,alpha-trehalose + H2O = alpha-D-glucose + beta-D-glucose. The polypeptide is Trehalase (tre1) (Pimpla hypochondriaca (Parasitoid wasp)).